We begin with the raw amino-acid sequence, 217 residues long: Probable transaldolase (217 aa).

Catalysis depends on K83, which acts as the Schiff-base intermediate with substrate.

This sequence belongs to the transaldolase family. Type 3B subfamily.

The protein resides in the cytoplasm. The catalysed reaction is D-sedoheptulose 7-phosphate + D-glyceraldehyde 3-phosphate = D-erythrose 4-phosphate + beta-D-fructose 6-phosphate. It functions in the pathway carbohydrate degradation; pentose phosphate pathway; D-glyceraldehyde 3-phosphate and beta-D-fructose 6-phosphate from D-ribose 5-phosphate and D-xylulose 5-phosphate (non-oxidative stage): step 2/3. In terms of biological role, transaldolase is important for the balance of metabolites in the pentose-phosphate pathway. The sequence is that of Probable transaldolase from Fervidobacterium nodosum (strain ATCC 35602 / DSM 5306 / Rt17-B1).